Here is a 63-residue protein sequence, read N- to C-terminus: Sperm protamine P1 (63 aa).

The interval Met1–Tyr63 is disordered.

This sequence belongs to the protamine P1 family. In terms of tissue distribution, testis.

The protein resides in the nucleus. It localises to the chromosome. Functionally, protamines substitute for histones in the chromatin of sperm during the haploid phase of spermatogenesis. They compact sperm DNA into a highly condensed, stable and inactive complex. This Phascogale tapoatafa (Common wambenger) protein is Sperm protamine P1 (PRM1).